A 557-amino-acid polypeptide reads, in one-letter code: Glutamine--tRNA ligase (557 aa).

The 'HIGH' region motif lies at 42–52; the sequence is PEPNGYLHIGH. ATP is bound by residues 43-45 and 49-55; these read EPN and HIGHAKS. Positions 75 and 220 each coordinate L-glutamine. Residues Thr239 and 270–271 contribute to the ATP site; that span reads RL. The short motif at 277-281 is the 'KMSKS' region element; it reads LTSKR.

This sequence belongs to the class-I aminoacyl-tRNA synthetase family. Monomer.

The protein resides in the cytoplasm. The enzyme catalyses tRNA(Gln) + L-glutamine + ATP = L-glutaminyl-tRNA(Gln) + AMP + diphosphate. This chain is Glutamine--tRNA ligase, found in Haemophilus influenzae (strain ATCC 51907 / DSM 11121 / KW20 / Rd).